The primary structure comprises 192 residues: Shikimate kinase (192 aa).

32–37 serves as a coordination point for ATP; the sequence is GAGKSA. Residue Ser-36 participates in Mg(2+) binding. Positions 54, 78, and 100 each coordinate substrate. Arg-138 is a binding site for ATP. Position 157 (Arg-157) interacts with substrate.

The protein belongs to the shikimate kinase family. As to quaternary structure, monomer. Mg(2+) serves as cofactor.

The protein resides in the cytoplasm. It carries out the reaction shikimate + ATP = 3-phosphoshikimate + ADP + H(+). It functions in the pathway metabolic intermediate biosynthesis; chorismate biosynthesis; chorismate from D-erythrose 4-phosphate and phosphoenolpyruvate: step 5/7. Functionally, catalyzes the specific phosphorylation of the 3-hydroxyl group of shikimic acid using ATP as a cosubstrate. The protein is Shikimate kinase of Rhizobium meliloti (strain 1021) (Ensifer meliloti).